The following is a 232-amino-acid chain: Putative N-acetylmannosamine-6-phosphate 2-epimerase (232 aa).

The protein belongs to the NanE family.

It catalyses the reaction an N-acyl-D-glucosamine 6-phosphate = an N-acyl-D-mannosamine 6-phosphate. It participates in amino-sugar metabolism; N-acetylneuraminate degradation; D-fructose 6-phosphate from N-acetylneuraminate: step 3/5. Functionally, converts N-acetylmannosamine-6-phosphate (ManNAc-6-P) to N-acetylglucosamine-6-phosphate (GlcNAc-6-P). The chain is Putative N-acetylmannosamine-6-phosphate 2-epimerase from Borreliella burgdorferi (strain ZS7) (Borrelia burgdorferi).